An 804-amino-acid polypeptide reads, in one-letter code: MAAGQKKYICSFCLKPFSRSEHKIRHERSHAGVKPFQCQVCKHSFVRRDLLQRHIRTVHRTFLLSSYASMTGDKADIPVSLGVGDVDSTSPRDIKMETLVNSMIKVNSGLINIHYHSSNVEKMDKQQRCVIGKESSSLKKGKSRFKQVKSRLESSISVKILQEYSLDFISSRDILTFFRMGVSHLVENKIFQNFFPDLFSSLQNDELVESFWINKPFGLIIACLGMSISLNQDSQKLWFICCTNLYASSSKHDNDFDTEDILSQTEQHDVFALILFYSLLVMLENNIPVSNSIKKFDVFSMLQDILKPFTVASSSYHYLNSKENAWFIFDLWVNILRDSNNFNNDSLLIFGWFVNQEFISSNPLKDFIYKGPSMSTTDLTLKHINILADSAYVYFIIKKTYPQELPSDFRVHDLLVYLNECFVMQQPIKPETSANPSLFANVMNARITDCKSKSNWLLWETIWFEFINNLTLRNGTTRNIWFIDNFPQVSTSCLLHHSSSFVDETLITTNLSIISMLLNLKSFTLASLNPRNIQLITDIVSFQLKLFSSELIASSDVSPSQVSQLLVNPNVHLMLYFWFDTIYVQRQSYLSSTEKEEFEKVEVFVNDYIITHQKNLVTDLHSILFDFWSDSFIAYHILLHAIVSSLRDNILYPYLIYSPHLNDQTKALLTDISNWSCFALQQPFRKTSRGSLSGASDMKSFSVASCLPLSPNFLKRDSNCNKILLPPLDIKAIEPISTSNYTYVNSAPKQQEKEQPLLRATGNNINLVQTIVVPPQVNMESQEFSASSTDNKQSKNIEIFSQIK.

2 consecutive C2H2-type zinc fingers follow at residues 8 to 30 and 36 to 59; these read YICSFCLKPFSRSEHKIRHERSH and FQCQVCKHSFVRRDLLQRHIRTVH. The span at 782–796 shows a compositional bias: polar residues; that stretch reads QEFSASSTDNKQSKN. Residues 782–804 are disordered; the sequence is QEFSASSTDNKQSKNIEIFSQIK.

It is found in the nucleus. The chain is Zinc finger protein YGR067C from Saccharomyces cerevisiae (strain ATCC 204508 / S288c) (Baker's yeast).